The sequence spans 689 residues: DNA ligase (689 aa).

NAD(+)-binding positions include 58-62, 107-108, and Glu-138; these read DQEYD and SL. Catalysis depends on Lys-140, which acts as the N6-AMP-lysine intermediate. Positions 161, 198, 314, and 338 each coordinate NAD(+). Zn(2+) contacts are provided by Cys-432, Cys-435, Cys-448, and Cys-453. The region spanning 611-689 is the BRCT domain; it reads ASSGTLSGKT…QELLEMLHGG (79 aa).

It belongs to the NAD-dependent DNA ligase family. LigA subfamily. Mg(2+) is required as a cofactor. The cofactor is Mn(2+).

The catalysed reaction is NAD(+) + (deoxyribonucleotide)n-3'-hydroxyl + 5'-phospho-(deoxyribonucleotide)m = (deoxyribonucleotide)n+m + AMP + beta-nicotinamide D-nucleotide.. Functionally, DNA ligase that catalyzes the formation of phosphodiester linkages between 5'-phosphoryl and 3'-hydroxyl groups in double-stranded DNA using NAD as a coenzyme and as the energy source for the reaction. It is essential for DNA replication and repair of damaged DNA. The sequence is that of DNA ligase from Methylacidiphilum infernorum (isolate V4) (Methylokorus infernorum (strain V4)).